A 240-amino-acid chain; its full sequence is Ribonuclease PH (240 aa).

Phosphate-binding positions include Arg87 and 125 to 127; that span reads GTR.

The protein belongs to the RNase PH family. As to quaternary structure, homohexameric ring arranged as a trimer of dimers.

It carries out the reaction tRNA(n+1) + phosphate = tRNA(n) + a ribonucleoside 5'-diphosphate. In terms of biological role, phosphorolytic 3'-5' exoribonuclease that plays an important role in tRNA 3'-end maturation. Removes nucleotide residues following the 3'-CCA terminus of tRNAs; can also add nucleotides to the ends of RNA molecules by using nucleoside diphosphates as substrates, but this may not be physiologically important. Probably plays a role in initiation of 16S rRNA degradation (leading to ribosome degradation) during starvation. The polypeptide is Ribonuclease PH (Pseudomonas putida (strain ATCC 47054 / DSM 6125 / CFBP 8728 / NCIMB 11950 / KT2440)).